Here is a 1156-residue protein sequence, read N- to C-terminus: Mastermind-like protein 2 (1156 aa).

The disordered stretch occupies residues 81 to 165 (QHGQGARKAG…PPASTPGDQR (85 aa)). The segment covering 113–122 (PAASQAAATA) has biased composition (low complexity). A compositionally biased stretch (polar residues) spans 153-165 (EQQPPASTPGDQR). S175 bears the Phosphoserine mark. 7 disordered regions span residues 340–359 (FNID…SLPM), 369–506 (SPGL…GSGQ), 531–630 (QQKP…QQQQ), 658–680 (QQQQ…QPLL), 705–743 (YQVS…GYMN), 784–820 (IAPQ…YSGG), and 1059–1100 (LPNL…FQGT). Polar residues-rich tracts occupy residues 344–354 (LGQQSQRSTPR), 371–380 (GLTQGPSGSP), 393–419 (MANS…TGSG), and 428–437 (QEVSHAQQLK). Positions 440–470 (AANRQQHARMQQHQQQHQPTNWSALPSSAGP) are enriched in low complexity. Composition is skewed to polar residues over residues 484-496 (SFGQ…QSSP), 532-543 (QKPQDLSRSFIN), and 563-587 (NSDQ…LHYT). The span at 588–630 (QQQQQQQQQQQQQQQQQQQQQQQQQQQQQQQQQQSSISAQQQQ) shows a compositional bias: low complexity. Composition is skewed to low complexity over residues 706-725 (QVSQ…NTGP) and 733-743 (SNPNTGSGYMN). Polar residues predominate over residues 807 to 820 (NVGNMQPTAQYSGG).

The protein belongs to the mastermind family. Interacts through its N-terminal region with the ankyrin repeat region of the Notch proteins NOTCH1, NOTCH2, NOTCH3 and NOTCH4. Forms a DNA-binding complex with Notch proteins and RBPSUH/RBP-J kappa. In terms of tissue distribution, widely expressed with high levels detected in placenta, salivary gland and skeletal muscle.

It is found in the nucleus speckle. In terms of biological role, acts as a transcriptional coactivator for NOTCH proteins. Has been shown to amplify NOTCH-induced transcription of HES1. Potentiates activation by NOTCH3 and NOTCH4 more efficiently than MAML1 or MAML3. In Homo sapiens (Human), this protein is Mastermind-like protein 2 (MAML2).